The primary structure comprises 618 residues: Proline--tRNA ligase (618 aa).

The protein belongs to the class-II aminoacyl-tRNA synthetase family. ProS type 1 subfamily. As to quaternary structure, homodimer.

The protein localises to the cytoplasm. It catalyses the reaction tRNA(Pro) + L-proline + ATP = L-prolyl-tRNA(Pro) + AMP + diphosphate. Its function is as follows. Catalyzes the attachment of proline to tRNA(Pro) in a two-step reaction: proline is first activated by ATP to form Pro-AMP and then transferred to the acceptor end of tRNA(Pro). As ProRS can inadvertently accommodate and process non-cognate amino acids such as alanine and cysteine, to avoid such errors it has two additional distinct editing activities against alanine. One activity is designated as 'pretransfer' editing and involves the tRNA(Pro)-independent hydrolysis of activated Ala-AMP. The other activity is designated 'posttransfer' editing and involves deacylation of mischarged Ala-tRNA(Pro). The misacylated Cys-tRNA(Pro) is not edited by ProRS. In Streptococcus pyogenes serotype M12 (strain MGAS2096), this protein is Proline--tRNA ligase.